A 116-amino-acid polypeptide reads, in one-letter code: Large ribosomal subunit protein bL17 (116 aa).

It belongs to the bacterial ribosomal protein bL17 family. As to quaternary structure, part of the 50S ribosomal subunit. Contacts protein L32.

The polypeptide is Large ribosomal subunit protein bL17 (Prochlorococcus marinus (strain MIT 9312)).